A 444-amino-acid chain; its full sequence is E1B 55 kDa protein (444 aa).

Positions 1 to 35 are disordered; it reads MEQNADMEPDRQVNQRPPRFRARGAGVRGRGRVRR. A phosphoserine mark is found at serine 438 and serine 439.

This sequence belongs to the adenoviridae E1B 55 kDa protein family. In terms of assembly, interacts with host PML-4 and PML-5; this interaction promotes efficient subnuclear targeting of E1B-55K to PML nuclear bodies. Interacts with E4-ORF3 protein. Interacts with E4-ORF6 protein.

It is found in the host nucleus. The protein localises to the host cytoplasm. Its function is as follows. Plays a major role to prevent cellular inhibition of viral genome replication. Assembles an SCF-like E3 ubiquitin ligase complex based on the cellular proteins ELOB, ELOC, CUL5 and RBX1, in cooperation with viral E4orf6. This viral RING-type ligase ubiquitinates cellular substrates and targets them to proteasomal degradation: TP53/p53, LIG4, MRE11-RAD50-NBS1 (MRN) complex, ITGA3, DAXX and BLM. E1B-55K probably acts as the substrate-specific adapter of the SCF-like E3 ubiquitin ligase complex. Degradation of host TP53/p53 activity is essential for preventing E1A-induced TP53 accumulation that would otherwise lead to cell apoptosis and growth arrest. E1B-55K also inactivates TP53 transcription-factor activity by binding its transactivation domain. E1B-55K also functions as a SUMO1 E3 ligase for TP53 which causes the latter to be sequestered in promyelocytic leukemia (PML) nuclear bodies thereby contributing to maximal inhibition of TP53 function. In Canis lupus familiaris (Dog), this protein is E1B 55 kDa protein.